Reading from the N-terminus, the 156-residue chain is Small ribosomal subunit protein uS7 (156 aa).

This sequence belongs to the universal ribosomal protein uS7 family. In terms of assembly, part of the 30S ribosomal subunit. Contacts proteins S9 and S11.

Functionally, one of the primary rRNA binding proteins, it binds directly to 16S rRNA where it nucleates assembly of the head domain of the 30S subunit. Is located at the subunit interface close to the decoding center, probably blocks exit of the E-site tRNA. This chain is Small ribosomal subunit protein uS7, found in Bacillus cereus (strain ZK / E33L).